Reading from the N-terminus, the 212-residue chain is ATP phosphoribosyltransferase 2 (212 aa).

This sequence belongs to the ATP phosphoribosyltransferase family. Short subfamily. As to quaternary structure, heteromultimer composed of HisG and HisZ subunits.

Its subcellular location is the cytoplasm. The enzyme catalyses 1-(5-phospho-beta-D-ribosyl)-ATP + diphosphate = 5-phospho-alpha-D-ribose 1-diphosphate + ATP. It functions in the pathway amino-acid biosynthesis; L-histidine biosynthesis; L-histidine from 5-phospho-alpha-D-ribose 1-diphosphate: step 1/9. Functionally, catalyzes the condensation of ATP and 5-phosphoribose 1-diphosphate to form N'-(5'-phosphoribosyl)-ATP (PR-ATP). Has a crucial role in the pathway because the rate of histidine biosynthesis seems to be controlled primarily by regulation of HisG enzymatic activity. The polypeptide is ATP phosphoribosyltransferase 2 (hisG2) (Geobacter sulfurreducens (strain ATCC 51573 / DSM 12127 / PCA)).